We begin with the raw amino-acid sequence, 177 residues long: Transmembrane protein 196 (177 aa).

Helical transmembrane passes span 11–31, 47–67, 73–93, and 106–126; these read LLVL…VGAV, SSPV…IFCA, LIMI…ILNI, and LYSL…GCTI. The segment covering 152–162 has biased composition (basic and acidic residues); that stretch reads HSHEMTEKDTE. The disordered stretch occupies residues 152–177; the sequence is HSHEMTEKDTENITNGGGPLALNGRV.

Its subcellular location is the cytoplasm. It localises to the membrane. This chain is Transmembrane protein 196 (tmem196), found in Xenopus tropicalis (Western clawed frog).